A 321-amino-acid chain; its full sequence is Acetyl-coenzyme A carboxylase carboxyl transferase subunit alpha (321 aa).

The 255-residue stretch at 39-293 folds into the CoA carboxyltransferase C-terminal domain; it reads KLEEKSRKLT…KTELKRNLEE (255 aa).

The protein belongs to the AccA family. Acetyl-CoA carboxylase is a heterohexamer composed of biotin carboxyl carrier protein (AccB), biotin carboxylase (AccC) and two subunits each of ACCase subunit alpha (AccA) and ACCase subunit beta (AccD).

The protein resides in the cytoplasm. The catalysed reaction is N(6)-carboxybiotinyl-L-lysyl-[protein] + acetyl-CoA = N(6)-biotinyl-L-lysyl-[protein] + malonyl-CoA. Its pathway is lipid metabolism; malonyl-CoA biosynthesis; malonyl-CoA from acetyl-CoA: step 1/1. Functionally, component of the acetyl coenzyme A carboxylase (ACC) complex. First, biotin carboxylase catalyzes the carboxylation of biotin on its carrier protein (BCCP) and then the CO(2) group is transferred by the carboxyltransferase to acetyl-CoA to form malonyl-CoA. In Methylococcus capsulatus (strain ATCC 33009 / NCIMB 11132 / Bath), this protein is Acetyl-coenzyme A carboxylase carboxyl transferase subunit alpha.